The primary structure comprises 686 residues: Delta-like protein 4 (686 aa).

Positions 1-26 (MTPASRSACRWALLLLAVLWPQQRAA) are cleaved as a signal peptide. Residues 27–532 (GSGIFQLRLQ…GLPPSFPWVA (506 aa)) are Extracellular-facing. 2 cysteine pairs are disulfide-bonded: Cys-51–Cys-55 and Cys-62–Cys-75. Residues Asn-79, Asn-109, and Asn-162 are each glycosylated (N-linked (GlcNAc...) asparagine). Residues 174 to 218 (VICSDNYYGESCSRLCKKRDDHFGHYECQPDGSLSCLPGWTGKYC) enclose the DSL domain. A disulfide bond links Cys-176 and Cys-185. Interaction with Notch1 regions lie at residues 186–188 (SRL) and 192–196 (RDDHF). Intrachain disulfides connect Cys-189–Cys-201, Cys-209–Cys-218, Cys-223–Cys-234, Cys-227–Cys-240, Cys-242–Cys-251, Cys-254–Cys-265, Cys-260–Cys-271, Cys-273–Cys-282, Cys-289–Cys-301, Cys-295–Cys-311, Cys-313–Cys-322, Cys-329–Cys-340, Cys-334–Cys-349, Cys-351–Cys-360, Cys-367–Cys-378, Cys-372–Cys-389, Cys-391–Cys-400, Cys-407–Cys-418, Cys-412–Cys-427, Cys-429–Cys-438, Cys-445–Cys-456, Cys-450–Cys-465, Cys-467–Cys-476, Cys-485–Cys-496, Cys-490–Cys-507, and Cys-509–Cys-518. EGF-like domains lie at 219-252 (DQPICLSGCHEQNGYCSKPDECICRPGWQGRLCN), 253-283 (ECIPHNGCRHGTCSIPWQCACDEGWGGLFCD), 285-323 (DLNYCTHHSPCKNGSTCSNSGPKGYTCTCLPGYTGEHCE), 325-361 (GLSKCASNPCRNGGSCKDQENSYHCLCPPGYYGQHCE), 364-401 (TLTCADSPCFNGGSCRERNQGSSYACECPPNFTGSNCE), 403-439 (KVDRCTSNPCANGGQCQNRGPSRTCRCRPGFTGTHCE), 441-477 (HISDCARSPCAHGGTCHDLENGPVCTCPAGFSGRRCE), and 481-519 (THDACASGPCFNGATCYTGLSPNNFVCNCPYGFVGSRCE). Asn-297 carries an N-linked (GlcNAc...) asparagine glycan. Residue Asn-394 is glycosylated (N-linked (GlcNAc...) asparagine). Residues 533–553 (VSLGVGLVVLLVLLVMVVVAV) form a helical membrane-spanning segment. Over 554–686 (RQLRLRRPDD…RNECVIATEV (133 aa)) the chain is Cytoplasmic.

As to quaternary structure, interacts with NOTCH4. Interacts (via N-terminal DSL and MNNL domains) with NOTCH1 (via EGF-like domains). In terms of tissue distribution, expressed in vascular endothelium. Expressed in retina at least during embryogenesis.

Its subcellular location is the cell membrane. Its function is as follows. Involved in the Notch signaling pathway as Notch ligand. Activates NOTCH1 and NOTCH4. Involved in angiogenesis; negatively regulates endothelial cell proliferation and migration and angiogenic sprouting. Essential for retinal progenitor proliferation. Required for suppressing rod fates in late retinal progenitors as well as for proper generation of other retinal cell types. During spinal cord neurogenesis, inhibits V2a interneuron fate. The polypeptide is Delta-like protein 4 (Dll4) (Mus musculus (Mouse)).